A 127-amino-acid polypeptide reads, in one-letter code: Snaclec macrovipecetin subunit beta (127 aa).

3 disulfides stabilise this stretch: Cys4–Cys15, Cys32–Cys121, and Cys98–Cys113. Residues 11-122 (YEGHCYKVFD…CSRTYKFVCK (112 aa)) form the C-type lectin domain.

As to quaternary structure, heterodimer of subunits alpha and beta; disulfide-linked. Expressed by the venom gland.

It is found in the secreted. Its function is as follows. Interferes with one step of hemostasis (modulation of platelet aggregation, or coagulation cascade, for example). In Macrovipera lebetinus (Levantine viper), this protein is Snaclec macrovipecetin subunit beta.